A 617-amino-acid polypeptide reads, in one-letter code: Secretogranin-2 (617 aa).

An N-terminal signal peptide occupies residues 1–27 (MAEAKTHWLGAALSLIPLIFLISGAEA). Residues 28-30 (ASF) constitute a propeptide that is removed on maturation. The disordered stretch occupies residues 120–143 (QAENEPQSAPKENKPYALNSEKNF). The residue at position 151 (Tyr-151) is a Sulfotyrosine. Ser-174 bears the Phosphoserine mark. Positions 182–200 (TNEIVEEQYTPQSLATLES) are O-glycosylated at one site. Basic and acidic residues-rich tracts occupy residues 257–284 (IESQ…EMKR) and 293–302 (EDLRKESKDQ). The segment at 257–302 (IESQTQEEVRDSKENIEKNEQINDEMKRSGQLGIQEEDLRKESKDQ) is disordered. Residue Ser-268 is modified to Phosphoserine. 4 positions are modified to phosphoserine: Ser-432, Ser-532, Ser-555, and Ser-556. The tract at residues 552–583 (NQGSSQETDKLAPVSKRFPVGPPKNDDTPNRQ) is disordered.

Belongs to the chromogranin/secretogranin protein family. As to quaternary structure, interacts with Secretogranin III/SCG3. Post-translationally, O-glycosylated.

The protein resides in the secreted. In terms of biological role, neuroendocrine protein of the granin family that regulates the biogenesis of secretory granules. In Homo sapiens (Human), this protein is Secretogranin-2 (SCG2).